The following is a 554-amino-acid chain: 5'-AMP-activated protein kinase catalytic subunit alpha-1 (554 aa).

The region spanning Tyr-22–Phe-274 is the Protein kinase domain. At Thr-27 the chain carries Phosphothreonine. Residues Leu-28–Val-36 and Lys-51 contribute to the ATP site. Asp-145 (proton acceptor) is an active-site residue. Position 178 is a phosphothreonine; by LKB1 and CaMKK2 (Thr-178). 2 positions are modified to phosphothreonine: Thr-264 and Thr-350. An AIS region spans residues Glu-297 to Glu-376. Phosphoserine is present on Ser-351. Ser-355 is subject to Phosphoserine; by ULK1. Phosphothreonine; by ULK1 is present on Thr-363. Thr-377 bears the Phosphothreonine mark. Ser-392 carries the phosphoserine; by ULK1 modification. A Phosphoserine modification is found at Ser-462. The span at Lys-480–Arg-500 shows a compositional bias: polar residues. The segment at Lys-480–Thr-531 is disordered. A Phosphoserine; by ULK1 modification is found at Ser-481. At Thr-483 the chain carries Phosphothreonine; by ULK1. Thr-485 bears the Phosphothreonine mark. Phosphoserine is present on residues Ser-491, Ser-503, Ser-519, and Ser-522. Over residues Ser-511–Leu-530 the composition is skewed to low complexity.

Belongs to the protein kinase superfamily. CAMK Ser/Thr protein kinase family. SNF1 subfamily. As to quaternary structure, AMPK is a heterotrimer of an alpha catalytic subunit (PRKAA1 or PRKAA2), a beta (PRKAB1 or PRKAB2) and a gamma non-catalytic subunits (PRKAG1, PRKAG2 or PRKAG3). Interacts with FNIP1 and FNIP2. Mg(2+) is required as a cofactor. Post-translationally, ubiquitinated. In terms of processing, phosphorylated at Thr-183 by STK11/LKB1 in complex with STE20-related adapter-alpha (STRADA) pseudo kinase and CAB39. Also phosphorylated at Thr-183 by CAMKK2; triggered by a rise in intracellular calcium ions, without detectable changes in the AMP/ATP ratio. CAMKK1 can also phosphorylate Thr-183, but at a much lower level. Dephosphorylated by protein phosphatase 2A and 2C (PP2A and PP2C). Phosphorylated by ULK1 and ULK2; leading to negatively regulate AMPK activity and suggesting the existence of a regulatory feedback loop between ULK1, ULK2 and AMPK. Dephosphorylated by PPM1A and PPM1B. Glycosylated; O-GlcNAcylated by OGT, promoting the AMP-activated protein kinase (AMPK) activity.

Its subcellular location is the cytoplasm. It is found in the nucleus. It carries out the reaction L-seryl-[protein] + ATP = O-phospho-L-seryl-[protein] + ADP + H(+). It catalyses the reaction L-threonyl-[protein] + ATP = O-phospho-L-threonyl-[protein] + ADP + H(+). The catalysed reaction is L-seryl-[acetyl-CoA carboxylase] + ATP = O-phospho-L-seryl-[acetyl-CoA carboxylase] + ADP + H(+). The enzyme catalyses L-seryl-[3-hydroxy-3-methylglutaryl-coenzyme A reductase] + ATP = O-phospho-L-seryl-[3-hydroxy-3-methylglutaryl-coenzyme A reductase] + ADP + H(+). It carries out the reaction L-seryl-[tau protein] + ATP = O-phospho-L-seryl-[tau protein] + ADP + H(+). It catalyses the reaction L-threonyl-[tau protein] + ATP = O-phospho-L-threonyl-[tau protein] + ADP + H(+). Activated by phosphorylation on Thr-183. Binding of AMP to non-catalytic gamma subunit (PRKAG1, PRKAG2 or PRKAG3) results in allosteric activation, inducing phosphorylation on Thr-183. AMP-binding to gamma subunit also sustains activity by preventing dephosphorylation of Thr-183. ADP also stimulates Thr-183 phosphorylation, without stimulating already phosphorylated AMPK. ATP promotes dephosphorylation of Thr-183, rendering the enzyme inactive. Under physiological conditions AMPK mainly exists in its inactive form in complex with ATP, which is much more abundant than AMP. Selectively inhibited by compound C (6-[4-(2-Piperidin-1-yl-ethoxy)-phenyl)]-3-pyridin-4-yl-pyyrazolo[1,5-a] pyrimidine. Activated by resveratrol, a natural polyphenol present in red wine, and S17834, a synthetic polyphenol. Catalytic subunit of AMP-activated protein kinase (AMPK), an energy sensor protein kinase that plays a key role in regulating cellular energy metabolism. In response to reduction of intracellular ATP levels, AMPK activates energy-producing pathways and inhibits energy-consuming processes: inhibits protein, carbohydrate and lipid biosynthesis, as well as cell growth and proliferation. AMPK acts via direct phosphorylation of metabolic enzymes, and by longer-term effects via phosphorylation of transcription regulators. Regulates lipid synthesis by phosphorylating and inactivating lipid metabolic enzymes such as ACACA, ACACB, GYS1, HMGCR and LIPE; regulates fatty acid and cholesterol synthesis by phosphorylating acetyl-CoA carboxylase (ACACA and ACACB) and hormone-sensitive lipase (LIPE) enzymes, respectively. Promotes lipolysis of lipid droplets by mediating phosphorylation of isoform 1 of CHKA (CHKalpha2). Regulates insulin-signaling and glycolysis by phosphorylating IRS1, PFKFB2 and PFKFB3. AMPK stimulates glucose uptake in muscle by increasing the translocation of the glucose transporter SLC2A4/GLUT4 to the plasma membrane, possibly by mediating phosphorylation of TBC1D4/AS160. Regulates transcription and chromatin structure by phosphorylating transcription regulators involved in energy metabolism such as CRTC2/TORC2, FOXO3, histone H2B, HDAC5, MEF2C, MLXIPL/ChREBP, EP300, HNF4A, p53/TP53, SREBF1, SREBF2 and PPARGC1A. Acts as a key regulator of glucose homeostasis in liver by phosphorylating CRTC2/TORC2, leading to CRTC2/TORC2 sequestration in the cytoplasm. In response to stress, phosphorylates 'Ser-36' of histone H2B (H2BS36ph), leading to promote transcription. Acts as a key regulator of cell growth and proliferation by phosphorylating FNIP1, TSC2, RPTOR, WDR24 and ATG1/ULK1: in response to nutrient limitation, negatively regulates the mTORC1 complex by phosphorylating RPTOR component of the mTORC1 complex and by phosphorylating and activating TSC2. Also phosphorylates and inhibits GATOR2 subunit WDR24 in response to nutrient limitation, leading to suppress glucose-mediated mTORC1 activation. In response to energetic stress, phosphorylates FNIP1, inactivating the non-canonical mTORC1 signaling, thereby promoting nuclear translocation of TFEB and TFE3, and inducing transcription of lysosomal or autophagy genes. In response to nutrient limitation, promotes autophagy by phosphorylating and activating ATG1/ULK1. In that process also activates WDR45/WIPI4. Phosphorylates CASP6, thereby preventing its autoprocessing and subsequent activation. In response to nutrient limitation, phosphorylates transcription factor FOXO3 promoting FOXO3 mitochondrial import. Also acts as a regulator of cellular polarity by remodeling the actin cytoskeleton; probably by indirectly activating myosin. AMPK also acts as a regulator of circadian rhythm by mediating phosphorylation of CRY1, leading to destabilize it. May regulate the Wnt signaling pathway by phosphorylating CTNNB1, leading to stabilize it. Also has tau-protein kinase activity: in response to amyloid beta A4 protein (APP) exposure, activated by CAMKK2, leading to phosphorylation of MAPT/TAU; however the relevance of such data remains unclear in vivo. Also phosphorylates CFTR, EEF2K, KLC1, NOS3 and SLC12A1. Regulates hepatic lipogenesis. Activated via SIRT3, represses sterol regulatory element-binding protein (SREBP) transcriptional activities and ATP-consuming lipogenesis to restore cellular energy balance. Upon stress, regulates mitochondrial fragmentation through phosphorylation of MTFR1L. The sequence is that of 5'-AMP-activated protein kinase catalytic subunit alpha-1 (PRKAA1) from Pongo abelii (Sumatran orangutan).